Reading from the N-terminus, the 78-residue chain is Acyl carrier protein (78 aa).

Residues 2–77 (STIEESVKAI…AAIDFIQASQ (76 aa)) enclose the Carrier domain. At Ser-37 the chain carries O-(pantetheine 4'-phosphoryl)serine.

The protein belongs to the acyl carrier protein (ACP) family. 4'-phosphopantetheine is transferred from CoA to a specific serine of apo-ACP by AcpS. This modification is essential for activity because fatty acids are bound in thioester linkage to the sulfhydryl of the prosthetic group.

The protein localises to the cytoplasm. It functions in the pathway lipid metabolism; fatty acid biosynthesis. Functionally, carrier of the growing fatty acid chain in fatty acid biosynthesis. The chain is Acyl carrier protein from Sodalis glossinidius (strain morsitans).